Reading from the N-terminus, the 154-residue chain is 6,7-dimethyl-8-ribityllumazine synthase (154 aa).

5-amino-6-(D-ribitylamino)uracil contacts are provided by residues Phe-22, 56-58 (AFE), and 80-82 (TVI). Position 85–86 (85–86 (ST)) interacts with (2S)-2-hydroxy-3-oxobutyl phosphate. The Proton donor role is filled by His-88. Phe-113 contacts 5-amino-6-(D-ribitylamino)uracil. Arg-127 lines the (2S)-2-hydroxy-3-oxobutyl phosphate pocket.

Belongs to the DMRL synthase family.

It catalyses the reaction (2S)-2-hydroxy-3-oxobutyl phosphate + 5-amino-6-(D-ribitylamino)uracil = 6,7-dimethyl-8-(1-D-ribityl)lumazine + phosphate + 2 H2O + H(+). It functions in the pathway cofactor biosynthesis; riboflavin biosynthesis; riboflavin from 2-hydroxy-3-oxobutyl phosphate and 5-amino-6-(D-ribitylamino)uracil: step 1/2. Its function is as follows. Catalyzes the formation of 6,7-dimethyl-8-ribityllumazine by condensation of 5-amino-6-(D-ribitylamino)uracil with 3,4-dihydroxy-2-butanone 4-phosphate. This is the penultimate step in the biosynthesis of riboflavin. This Lactococcus lactis subsp. lactis (strain IL1403) (Streptococcus lactis) protein is 6,7-dimethyl-8-ribityllumazine synthase.